The chain runs to 452 residues: tRNA modification GTPase MnmE (452 aa).

Arg-21, Glu-78, and Lys-118 together coordinate (6S)-5-formyl-5,6,7,8-tetrahydrofolate. Positions 214–375 constitute a TrmE-type G domain; sequence GMKVVIAGRP…LREHLKQAMG (162 aa). Asn-224 lines the K(+) pocket. Residues 224–229, 243–249, and 268–271 each bind GTP; these read NAGKSS, TDIAGTT, and DTAG. Ser-228 is a Mg(2+) binding site. 3 residues coordinate K(+): Thr-243, Ile-245, and Thr-248. Residue Thr-249 participates in Mg(2+) binding. Lys-452 serves as a coordination point for (6S)-5-formyl-5,6,7,8-tetrahydrofolate.

The protein belongs to the TRAFAC class TrmE-Era-EngA-EngB-Septin-like GTPase superfamily. TrmE GTPase family. As to quaternary structure, homodimer. Heterotetramer of two MnmE and two MnmG subunits. K(+) is required as a cofactor.

It localises to the cytoplasm. Functionally, exhibits a very high intrinsic GTPase hydrolysis rate. Involved in the addition of a carboxymethylaminomethyl (cmnm) group at the wobble position (U34) of certain tRNAs, forming tRNA-cmnm(5)s(2)U34. This Haemophilus influenzae (strain PittEE) protein is tRNA modification GTPase MnmE.